The chain runs to 888 residues: Valine--tRNA ligase (888 aa).

A 'HIGH' region motif is present at residues 43-53 (PNVTGTLHLGH). Residues 538–542 (KMSKS) carry the 'KMSKS' region motif. Residue Lys541 coordinates ATP. The stretch at 821 to 888 (LIDLDAERAR…RLKAALGRLA (68 aa)) forms a coiled coil.

Belongs to the class-I aminoacyl-tRNA synthetase family. ValS type 1 subfamily. As to quaternary structure, monomer.

Its subcellular location is the cytoplasm. The enzyme catalyses tRNA(Val) + L-valine + ATP = L-valyl-tRNA(Val) + AMP + diphosphate. Its function is as follows. Catalyzes the attachment of valine to tRNA(Val). As ValRS can inadvertently accommodate and process structurally similar amino acids such as threonine, to avoid such errors, it has a 'posttransfer' editing activity that hydrolyzes mischarged Thr-tRNA(Val) in a tRNA-dependent manner. This is Valine--tRNA ligase from Gluconobacter oxydans (strain 621H) (Gluconobacter suboxydans).